A 36-amino-acid polypeptide reads, in one-letter code: Pancreatic polypeptide (36 aa).

Tyrosine 36 is modified (tyrosine amide).

It belongs to the NPY family.

It localises to the secreted. Hormone secreted by pancreatic cells that acts as a regulator of pancreatic and gastrointestinal functions. The protein is Pancreatic polypeptide (PPY) of Struthio camelus (Common ostrich).